The following is a 288-amino-acid chain: Light-independent protochlorophyllide reductase iron-sulfur ATP-binding protein (288 aa).

Residues glycine 10–threonine 15 and lysine 39 each bind ATP. Residue serine 14 participates in Mg(2+) binding. 2 residues coordinate [4Fe-4S] cluster: cysteine 95 and cysteine 129. Residue asparagine 180 to arginine 181 participates in ATP binding.

The protein belongs to the NifH/BchL/ChlL family. As to quaternary structure, homodimer. Protochlorophyllide reductase is composed of three subunits; ChlL, ChlN and ChlB. [4Fe-4S] cluster is required as a cofactor.

The protein localises to the plastid. It is found in the chloroplast. It catalyses the reaction chlorophyllide a + oxidized 2[4Fe-4S]-[ferredoxin] + 2 ADP + 2 phosphate = protochlorophyllide a + reduced 2[4Fe-4S]-[ferredoxin] + 2 ATP + 2 H2O. The protein operates within porphyrin-containing compound metabolism; chlorophyll biosynthesis (light-independent). Functionally, component of the dark-operative protochlorophyllide reductase (DPOR) that uses Mg-ATP and reduced ferredoxin to reduce ring D of protochlorophyllide (Pchlide) to form chlorophyllide a (Chlide). This reaction is light-independent. The L component serves as a unique electron donor to the NB-component of the complex, and binds Mg-ATP. In Chara vulgaris (Common stonewort), this protein is Light-independent protochlorophyllide reductase iron-sulfur ATP-binding protein.